Reading from the N-terminus, the 360-residue chain is Phospho-N-acetylmuramoyl-pentapeptide-transferase (360 aa).

10 consecutive transmembrane segments (helical) span residues 25–45 (RGILGVLTALVLSLWMGPWLI), 74–94 (MGGALILSAIGISTLLWADLA), 97–117 (YVWVVLAVTLLFGAIGWVDDY), 132–152 (WKYFWQSVFGLGAAIFLYMTA), 168–188 (IEIPLGIGFVILTYFVIVGSS), 199–219 (GLAIMPTVMVGGGLGIFCYLS), 236–256 (SGELIVFCGALIGAGLGFLWF), 263–283 (VFMGDVGALALGAALGTIAVI), 288–308 (VVLFIMGGVFVMETLSVMIQV), and 338–358 (VIVRFWIITVILVLVGLATLK).

Belongs to the glycosyltransferase 4 family. MraY subfamily. It depends on Mg(2+) as a cofactor.

The protein resides in the cell inner membrane. The catalysed reaction is UDP-N-acetyl-alpha-D-muramoyl-L-alanyl-gamma-D-glutamyl-meso-2,6-diaminopimeloyl-D-alanyl-D-alanine + di-trans,octa-cis-undecaprenyl phosphate = di-trans,octa-cis-undecaprenyl diphospho-N-acetyl-alpha-D-muramoyl-L-alanyl-D-glutamyl-meso-2,6-diaminopimeloyl-D-alanyl-D-alanine + UMP. Its pathway is cell wall biogenesis; peptidoglycan biosynthesis. Catalyzes the initial step of the lipid cycle reactions in the biosynthesis of the cell wall peptidoglycan: transfers peptidoglycan precursor phospho-MurNAc-pentapeptide from UDP-MurNAc-pentapeptide onto the lipid carrier undecaprenyl phosphate, yielding undecaprenyl-pyrophosphoryl-MurNAc-pentapeptide, known as lipid I. This is Phospho-N-acetylmuramoyl-pentapeptide-transferase from Stutzerimonas stutzeri (strain A1501) (Pseudomonas stutzeri).